The primary structure comprises 112 residues: MIEIISNITSQDNVSTNKNNSFFNIINSSYLLKSTFSRFNQYFLNKKIEFDHIIAEEKKENKDKIVISSHFIVNYLLNILNQKNTDFNSKNFNNSKNDQIKKKKIDNNQVNL.

The interval 90-112 (KNFNNSKNDQIKKKKIDNNQVNL) is disordered.

This is an uncharacterized protein from Buchnera aphidicola subsp. Acyrthosiphon pisum (strain APS) (Acyrthosiphon pisum symbiotic bacterium).